The following is a 317-amino-acid chain: Melanocyte-stimulating hormone receptor (317 aa).

The Extracellular segment spans residues M1–E37. A glycan (N-linked (GlcNAc...) asparagine) is linked at N29. Residues V38–I63 traverse the membrane as a helical segment. Residues A64–P72 lie on the Cytoplasmic side of the membrane. The chain crosses the membrane as a helical span at residues T73–L93. Over E94–N118 the chain is Extracellular. A helical membrane pass occupies residues V119 to V140. Residues D141 to Q163 are Cytoplasmic-facing. Residues A164–Y183 traverse the membrane as a helical segment. Residues D184 to C191 lie on the Extracellular side of the membrane. The helical transmembrane segment at L192 to L211 threads the bilayer. Residues A212–A240 are Cytoplasmic-facing. The helical transmembrane segment at V241–L266 threads the bilayer. Topologically, residues C267–N279 are extracellular. Residues F280–F300 traverse the membrane as a helical segment. Topologically, residues R301–W317 are cytoplasmic. A lipid anchor (S-palmitoyl cysteine) is attached at C315.

This sequence belongs to the G-protein coupled receptor 1 family. In terms of assembly, interacts with MGRN1, but does not undergo MGRN1-mediated ubiquitination; this interaction competes with GNAS-binding and thus inhibits agonist-induced cAMP production. Interacts with OPN3; the interaction results in a decrease in MC1R-mediated cAMP signaling and ultimately a decrease in melanin production in melanocytes.

Its subcellular location is the cell membrane. In terms of biological role, receptor for MSH (alpha, beta and gamma) and ACTH. The activity of this receptor is mediated by G proteins which activate adenylate cyclase. Mediates melanogenesis, the production of eumelanin (black/brown) and phaeomelanin (red/yellow), via regulation of cAMP signaling in melanocytes. This Hylobates muelleri (Mueller's Bornean gibbon) protein is Melanocyte-stimulating hormone receptor (MC1R).